Here is a 482-residue protein sequence, read N- to C-terminus: Cilia- and flagella-associated protein 53 (482 aa).

3 coiled-coil regions span residues 9 to 40 (DARI…AVAE), 67 to 124 (ADLN…QALA), and 152 to 413 (IEER…AKDA). The interval 462–482 (VNQTLSSTDPPVWHGRRKFDW) is disordered.

This sequence belongs to the CFAP53 family.

It localises to the cell projection. It is found in the cilium. The protein localises to the flagellum. Its function is as follows. May play a role in filopodium movement. The polypeptide is Cilia- and flagella-associated protein 53 (Chlamydomonas reinhardtii (Chlamydomonas smithii)).